The sequence spans 235 residues: Sugar fermentation stimulation protein homolog (235 aa).

It belongs to the SfsA family.

The protein is Sugar fermentation stimulation protein homolog of Pseudomonas aeruginosa (strain LESB58).